Here is a 123-residue protein sequence, read N- to C-terminus: WAP four-disulfide core domain protein 5 (123 aa).

Residues 1–24 (MRIQSLLLLGALLAVGSQPPAAFG) form the signal peptide. 2 WAP domains span residues 27-73 (KGEK…CVPR) and 74-121 (VSVK…RDPA). Disulfide bonds link cysteine 34/cysteine 62, cysteine 41/cysteine 66, cysteine 49/cysteine 61, cysteine 55/cysteine 70, cysteine 81/cysteine 109, cysteine 88/cysteine 113, cysteine 96/cysteine 108, and cysteine 102/cysteine 117.

It localises to the secreted. In terms of biological role, putative acid-stable proteinase inhibitor. The protein is WAP four-disulfide core domain protein 5 (WFDC5) of Saimiri boliviensis boliviensis (Bolivian squirrel monkey).